The chain runs to 104 residues: V-type ATP synthase subunit F (104 aa).

This sequence belongs to the V-ATPase F subunit family.

Functionally, produces ATP from ADP in the presence of a proton gradient across the membrane. The polypeptide is V-type ATP synthase subunit F (Thermus thermophilus (strain ATCC BAA-163 / DSM 7039 / HB27)).